Consider the following 270-residue polypeptide: uncharacterized protein (270 aa).

An N-terminal signal peptide occupies residues 1-22; the sequence is MEYIKKIALYMSVLLLIIFIGG. Residue C23 is the site of N-palmitoyl cysteine attachment. The S-diacylglycerol cysteine moiety is linked to residue C23.

This sequence belongs to the staphylococcal tandem lipoprotein family.

It is found in the cell membrane. This is an uncharacterized protein from Staphylococcus aureus (strain NCTC 8325 / PS 47).